Reading from the N-terminus, the 601-residue chain is Cdc42-interacting protein 4 (601 aa).

The required for translocation to the plasma membrane in response to insulin, podosome formation and interaction with AKAP9 and microtubules stretch occupies residues 1–117 (MDWGTELWDQ…EMKQERKMHF (117 aa)). Positions 1–264 (MDWGTELWDQ…AANAVDPKND (264 aa)) constitute an F-BAR domain. Residues 67–259 (FSQQQSFVQI…EGMKVAANAV (193 aa)) adopt a coiled-coil conformation. 3 disordered regions span residues 280 to 358 (GDVE…GRDP), 390 to 420 (DFSH…EVDQ), and 478 to 543 (NRGD…SPIG). Positions 289-302 (QPMNRAPSDSSLGT) are enriched in polar residues. The interaction with CDC42 stretch occupies residues 293 to 537 (RAPSDSSLGT…TEFDEDFEEE (245 aa)). The tract at residues 293–601 (RAPSDSSLGT…PTSYLRVTLN (309 aa)) is interaction with PDE6G. Phosphoserine is present on residues serine 296, serine 298, and serine 299. Over residues 314 to 329 (GRSRTKRWPFGKKNKP) the composition is skewed to basic residues. Serine 335 is subject to Phosphoserine. A compositionally biased stretch (low complexity) spans 336-346 (PLGGPVPSALP). Position 351 is a phosphoserine (serine 351). A coiled-coil region spans residues 388-481 (TEDFSHLPPE…ESRVLSNRGD (94 aa)). The REM-1 domain occupies 393-470 (HLPPEQQRKR…VQKYEAWLAE (78 aa)). Over residues 407–420 (LEERSRELQKEVDQ) the composition is skewed to basic and acidic residues. The segment at 471–601 (AESRVLSNRG…PTSYLRVTLN (131 aa)) is required for interaction with FASLG and localization to lysosomes. Residue serine 482 is modified to Phosphoserine. Positions 487-541 (ARPPDPPTSAPPDSSSNSASQDTKESSEEPPSEESQDTPIYTEFDEDFEEEPTSP) are interaction with DNM2 and WASL. A compositionally biased stretch (low complexity) spans 497-506 (PPDSSSNSAS). Acidic residues predominate over residues 529-538 (EFDEDFEEEP). Residues 529–601 (EFDEDFEEEP…PTSYLRVTLN (73 aa)) form an interaction with DNM1 and WASL region. The tract at residues 538–601 (PTSPIGHCVA…PTSYLRVTLN (64 aa)) is required for podosome formation. In terms of domain architecture, SH3 spans 540–601 (SPIGHCVAIY…PTSYLRVTLN (62 aa)). The interval 544–601 (HCVAIYHFEGSSEGTISMAEGEDLSLMEEDKGDGWTRVRRKEGGEGYVPTSYLRVTLN) is interaction with WAS. Residues 546–601 (VAIYHFEGSSEGTISMAEGEDLSLMEEDKGDGWTRVRRKEGGEGYVPTSYLRVTLN) form an interaction with ARHGAP17, DAAM1, DIAPH1 and DIAPH2 region.

The protein belongs to the FNBP1 family. Homodimerizes, the dimers can polymerize end-to-end to form filamentous structures. Interacts with AKAP9, ARHGAP17, DAAM1, DIAPH1, DIAPH2, DNM1, FASLG/FASL, GAPVD1, LYN, microtubules, PDE6G, SRC and WAS/WASP. Interacts with the ligand binding domain of the thyroid receptor (TR) in the presence of thyroid hormone. May interact with CTNNB1 and HD/HTT. Interacts specifically with GTP-bound CDC42 and RHOQ. Interacts with DNM2 and WASL. In terms of processing, tyrosine phosphorylated. Also phosphorylated by PKA.

The protein localises to the cytoplasm. It localises to the cytoskeleton. The protein resides in the cell cortex. It is found in the lysosome. Its subcellular location is the golgi apparatus. The protein localises to the cell membrane. It localises to the cell projection. The protein resides in the phagocytic cup. Required to coordinate membrane tubulation with reorganization of the actin cytoskeleton during endocytosis. Also acts as a link between CDC42 signaling and regulation of the actin cytoskeleton. Binds to lipids such as phosphatidylinositol 4,5-bisphosphate and phosphatidylserine and promotes membrane invagination and the formation of tubules. Also enhances actin polymerization in the vicinity of membrane tubules by recruiting WASL/N-WASP which in turn activates the Arp2/3 complex. Actin polymerization and dynamin may promote the fission of membrane tubules to form endocytic vesicles. Required for the formation of podosomes, actin-rich adhesion structures specific to monocyte-derived cells. Required for translocation of GLUT4 to the plasma membrane in response to insulin signaling. May be required for the lysosomal retention of FASLG/FASL. In Pongo abelii (Sumatran orangutan), this protein is Cdc42-interacting protein 4 (TRIP10).